Here is a 574-residue protein sequence, read N- to C-terminus: Golgin subfamily A member 6-like protein 4 (574 aa).

Residues 1–11 (MWPQPRFPPHP) are compositionally biased toward pro residues. 2 disordered regions span residues 1 to 77 (MWPQ…YGEG) and 491 to 552 (KELK…AAGG). Over residues 51 to 62 (NGSSPDTATSGG) the composition is skewed to polar residues. The stretch at 157 to 496 (SKVEQLQDET…EQQVKELKKS (340 aa)) forms a coiled coil. Positions 491–504 (KELKKSGGAEEPRG) are enriched in basic and acidic residues. Positions 508-523 (AAAARPVAGAPVPQGA) are enriched in low complexity.

The protein belongs to the GOLGA6 family.

The protein is Golgin subfamily A member 6-like protein 4 (GOLGA6L4) of Homo sapiens (Human).